We begin with the raw amino-acid sequence, 417 residues long: Tol-Pal system protein TolB (417 aa).

The first 16 residues, 1–16, serve as a signal peptide directing secretion; the sequence is MRYLWLFLIHTIGLFA.

The protein belongs to the TolB family. In terms of assembly, the Tol-Pal system is composed of five core proteins: the inner membrane proteins TolA, TolQ and TolR, the periplasmic protein TolB and the outer membrane protein Pal. They form a network linking the inner and outer membranes and the peptidoglycan layer.

Its subcellular location is the periplasm. Part of the Tol-Pal system, which plays a role in outer membrane invagination during cell division and is important for maintaining outer membrane integrity. In Helicobacter pylori (strain ATCC 700392 / 26695) (Campylobacter pylori), this protein is Tol-Pal system protein TolB.